A 791-amino-acid chain; its full sequence is MKVPFKWLKDYVNINISANELGDRLTLSGSKVEEIISSGDEIQNVVTGKIEKIERHPDADKLVVCSVNIGKEEPIQIVTGANNMKEEDIVPVAVHGAVLPNDVKIKKGKLRGIMSNGMMCSEKELGMPESGVDGLMILPSDTAIGKDIKEVLDLDNAVIEFEITSNRPDCLSVVGIARETAATLGIKYTMPKLDYTPKNKANIKDSLEVEIRDDLCRRYMARGVKNVKIQESPEWMQERLEEAGVRAINNIVDITNFVMLELGQPLHAFDGRQITSNKIVIEKGKVGEKFATLDKVERTIDESVLCIKDGDRAVALAGIMGGLNSEVKEDTKEIILECANFDGTNIRVSSKKLGLRTESSSKFEKDLDPNLVEIAMDRVCHLIEELDAGEVMEGTIDIYKNPIKERNLKVDSNWMNKFLGTDISKEDMKEYLDRLELKTDVEGDTLNITVPTFRSDIVLKQDVAEEIARIYGYNNIPTTMFNSVSKRAGKTLKQHLEDKVVEILIGSGLNQSISYSFVSPKIFDKILIPKDNDLRNTVKIKNPLGEDYSLMRTTTLASMMEALSRNYSRNNSYARLFEMGKVYIPSQDEKVLPEERNTLVIGMYGEVDYLNLKGILENLIEELNIEKSSYKRESEHPTFHPGKTAKLYVNKEFAGLLGEIHPDVLDNYDIDEKCYIAELNLDVLFKNANIEKKYKALPKFPAVDRDMALLVDDEVLVQDIESIIRNKGGKILEDVKLFDVYKGAQIPEGKKSVAYSIVYRMPNRTLTDAEVNKVHDKIVRTLENNLGAELR.

In terms of domain architecture, tRNA-binding spans 39–149; it reads GDEIQNVVTG…SDTAIGKDIK (111 aa). The B5 domain occupies 403–478; sequence IKERNLKVDS…RIYGYNNIPT (76 aa). Mg(2+) contacts are provided by Asp456, Asp462, Glu465, and Glu466. Residues 698-791 form the FDX-ACB domain; it reads PKFPAVDRDM…LENNLGAELR (94 aa).

The protein belongs to the phenylalanyl-tRNA synthetase beta subunit family. Type 1 subfamily. In terms of assembly, tetramer of two alpha and two beta subunits. It depends on Mg(2+) as a cofactor.

It localises to the cytoplasm. The enzyme catalyses tRNA(Phe) + L-phenylalanine + ATP = L-phenylalanyl-tRNA(Phe) + AMP + diphosphate + H(+). In Clostridium tetani (strain Massachusetts / E88), this protein is Phenylalanine--tRNA ligase beta subunit.